A 145-amino-acid chain; its full sequence is Transcriptional regulator SlyA (145 aa).

Residues 2–135 (ELPLGSDLAR…LALLVARLEK (134 aa)) form the HTH marR-type domain. Positions 49–72 (QIQLAKAIGIEQPSLVRTLDQLEE) form a DNA-binding region, H-T-H motif.

It belongs to the SlyA family. Homodimer.

In terms of biological role, transcription regulator that can specifically activate or repress expression of target genes. The sequence is that of Transcriptional regulator SlyA from Pectobacterium carotovorum subsp. carotovorum (strain PC1).